Consider the following 327-residue polypeptide: MHQGVITFSRNVFLPLTTVCQNHCGYCSFWTPIQKGCIMGREQVIETLRLGAGAGCTEALFTFGERPEMVPGFSEHLAAIGYSSILDYCYDLCKEALRFGILPHTNAGVLSTGEMERLREVNASMGLMLETTADVPAHQGSIGKSPAERLSMIARAGKLRIPFTTGILLGIGETTRDREESLEAIADLQREYGHIQEVIVQNFCPKEGTPMADVTPITTETFCETVRMARAILPEEVAVQVAPNLADAGVLVGCGANDLGGISPVTIDYVNPEHPWPAIDRLTEVAGDAVLRERLCIYPQYITQGWYPPSMEPLIRSLSIKIQERSL.

The 239-residue stretch at 6 to 244 folds into the Radical SAM core domain; that stretch reads ITFSRNVFLP…EEVAVQVAPN (239 aa). [4Fe-4S] cluster is bound by residues cysteine 20, cysteine 24, and cysteine 27.

The protein belongs to the radical SAM superfamily. CofG family. In terms of assembly, consists of two subunits, CofG and CofH. [4Fe-4S] cluster serves as cofactor.

It carries out the reaction 5-amino-5-(4-hydroxybenzyl)-6-(D-ribitylimino)-5,6-dihydrouracil + S-adenosyl-L-methionine = 7,8-didemethyl-8-hydroxy-5-deazariboflavin + 5'-deoxyadenosine + L-methionine + NH4(+) + H(+). Its pathway is cofactor biosynthesis; coenzyme F0 biosynthesis. Its function is as follows. Catalyzes the radical-mediated synthesis of 7,8-didemethyl-8-hydroxy-5-deazariboflavin from 5-amino-5-(4-hydroxybenzyl)-6-(D-ribitylimino)-5,6-dihydrouracil. The protein is 7,8-didemethyl-8-hydroxy-5-deazariboflavin synthase of Methanosphaerula palustris (strain ATCC BAA-1556 / DSM 19958 / E1-9c).